Here is a 139-residue protein sequence, read N- to C-terminus: Small ribosomal subunit protein uS12m (139 aa).

The N-terminal 29 residues, 1–29, are a transit peptide targeting the mitochondrion; it reads MSWSGLLRGLSMSLNYGLALAPRPWGTRP. The disordered stretch occupies residues 37–57; sequence HRRGPPKFPPSKPGPTEGRPQ.

It belongs to the universal ribosomal protein uS12 family. As to quaternary structure, component of the mitochondrial ribosome small subunit (28S) which comprises a 12S rRNA and about 30 distinct proteins.

The protein resides in the mitochondrion. In Bos taurus (Bovine), this protein is Small ribosomal subunit protein uS12m (MRPS12).